The following is a 775-amino-acid chain: Meiotic driver SPOK2 (775 aa).

Positions lysine 4–glutamate 69 form a coiled coil. 4 disordered regions span residues lysine 18 to glutamate 51, glutamine 211 to serine 249, leucine 442 to aspartate 525, and proline 734 to phenylalanine 761. The segment covering serine 444–threonine 457 has biased composition (polar residues).

The protein localises to the cytoplasm. The protein resides in the nucleus. Functionally, promotes unequal transmission of alleles from the parental zygote to progeny spores by acting as poison/antidote system, leading to poisoning of progeny that do not inherit the allele. May possess DNA nuclease activity that leads to spore killing, and a kinase activity that confers resistance to the nuclease activity. The polypeptide is Meiotic driver SPOK2 (Podospora anserina (strain S / ATCC MYA-4624 / DSM 980 / FGSC 10383) (Pleurage anserina)).